We begin with the raw amino-acid sequence, 620 residues long: Arginine--tRNA ligase (620 aa).

A 'HIGH' region motif is present at residues 147–157 (ANPTGPIHIGG).

It belongs to the class-I aminoacyl-tRNA synthetase family. Monomer.

The protein localises to the cytoplasm. It carries out the reaction tRNA(Arg) + L-arginine + ATP = L-arginyl-tRNA(Arg) + AMP + diphosphate. This is Arginine--tRNA ligase from Bifidobacterium longum subsp. infantis (strain ATCC 15697 / DSM 20088 / JCM 1222 / NCTC 11817 / S12).